A 191-amino-acid polypeptide reads, in one-letter code: UPF0302 protein SA1295 (191 aa).

This sequence belongs to the UPF0302 family.

This chain is UPF0302 protein SA1295, found in Staphylococcus aureus (strain N315).